Consider the following 196-residue polypeptide: Cilia- and flagella-associated protein 107 (196 aa).

Mn stretches follow at residues 47 to 62 (TPQCIYRKEYVPMPDH) and 97 to 109 (ISTYDDHYNRHNY).

As to quaternary structure, microtubule inner protein component of sperm flagellar doublet microtubules.

It is found in the cytoplasm. The protein resides in the cytoskeleton. Its subcellular location is the cilium axoneme. It localises to the flagellum axoneme. Functionally, microtubule inner protein (MIP) part of the dynein-decorated doublet microtubules (DMTs) in cilia axoneme, which is required for motile cilia beating. This chain is Cilia- and flagella-associated protein 107, found in Mus musculus (Mouse).